The primary structure comprises 187 residues: UPF0200 protein MA_4660 (187 aa).

9–16 contributes to the ATP binding site; the sequence is GMPASGKS.

Belongs to the UPF0200 family.

The polypeptide is UPF0200 protein MA_4660 (Methanosarcina acetivorans (strain ATCC 35395 / DSM 2834 / JCM 12185 / C2A)).